A 334-amino-acid chain; its full sequence is GTP 3',8-cyclase (334 aa).

In terms of domain architecture, Radical SAM core spans 13-239 (RFHRKFYYLR…KVKAVNDGPA (227 aa)). Arg22 contacts GTP. Residues Cys29 and Cys33 each contribute to the [4Fe-4S] cluster site. Tyr35 provides a ligand contact to S-adenosyl-L-methionine. Residue Cys36 coordinates [4Fe-4S] cluster. GTP is bound at residue Arg73. Gly77 contributes to the S-adenosyl-L-methionine binding site. Thr104 is a GTP binding site. Ser128 contacts S-adenosyl-L-methionine. GTP is bound at residue Lys165. Met199 contributes to the S-adenosyl-L-methionine binding site. [4Fe-4S] cluster contacts are provided by Cys262 and Cys265. 267-269 (RLR) serves as a coordination point for GTP. Cys279 is a binding site for [4Fe-4S] cluster.

This sequence belongs to the radical SAM superfamily. MoaA family. Monomer and homodimer. [4Fe-4S] cluster serves as cofactor.

It catalyses the reaction GTP + AH2 + S-adenosyl-L-methionine = (8S)-3',8-cyclo-7,8-dihydroguanosine 5'-triphosphate + 5'-deoxyadenosine + L-methionine + A + H(+). It functions in the pathway cofactor biosynthesis; molybdopterin biosynthesis. Catalyzes the cyclization of GTP to (8S)-3',8-cyclo-7,8-dihydroguanosine 5'-triphosphate. The protein is GTP 3',8-cyclase of Vibrio atlanticus (strain LGP32) (Vibrio splendidus (strain Mel32)).